The chain runs to 132 residues: Small ribosomal subunit protein uS11 (132 aa).

It belongs to the universal ribosomal protein uS11 family. Part of the 30S ribosomal subunit. Interacts with proteins S7 and S18. Binds to IF-3.

Functionally, located on the platform of the 30S subunit, it bridges several disparate RNA helices of the 16S rRNA. Forms part of the Shine-Dalgarno cleft in the 70S ribosome. This Alcanivorax borkumensis (strain ATCC 700651 / DSM 11573 / NCIMB 13689 / SK2) protein is Small ribosomal subunit protein uS11.